Reading from the N-terminus, the 428-residue chain is Sporulation kinase C (428 aa).

Helical transmembrane passes span 8–28 and 36–56; these read IISIILAMIFIMFWDYLFYFI and PVDIVYTAVTLVSVWMLAYYI. A PAS domain is found at 76–147; it reads LSEEKNRIMD…NTQIQNKASS (72 aa). The PAC domain occupies 148-200; sequence GMFTAKYVTKNGTIFWGEVHYKLYYDRDDQFTGSLGTMSDITERKEAEDELIE. The Histidine kinase domain occupies 221–426; it reads GIAHEVRNPL…VFQVVLPLKS (206 aa). H224 bears the Phosphohistidine; by autocatalysis mark.

In terms of assembly, oligomerizes, probably forms homodimers; oligomerization is assisted by FloT. Interacts with FloT. Another study shows only rare colocalization with FloT or FloA membrane assemblies. KinC membrane assemblies are more mobile than FloT membrane assemblies.

It localises to the cell membrane. It is found in the membrane raft. The catalysed reaction is ATP + protein L-histidine = ADP + protein N-phospho-L-histidine.. Functionally, phosphorylates the sporulation-regulatory protein Spo0A a transcription factor that also controls biofilm formation. Requires FloT and FloA for localization to DRMs and for activity. This Bacillus subtilis (strain 168) protein is Sporulation kinase C.